The chain runs to 277 residues: Formamidopyrimidine-DNA glycosylase (277 aa).

The Schiff-base intermediate with DNA role is filled by Pro-2. Glu-3 acts as the Proton donor in catalysis. The Proton donor; for beta-elimination activity role is filled by Lys-58. 3 residues coordinate DNA: His-95, Arg-113, and Arg-158. The FPG-type zinc finger occupies 243–277; sequence GVYDRANQPCLRCGGVVRQIRQAGRSTYYCTGCQH. Arg-267 (proton donor; for delta-elimination activity) is an active-site residue.

It belongs to the FPG family. As to quaternary structure, monomer. Zn(2+) serves as cofactor.

It catalyses the reaction Hydrolysis of DNA containing ring-opened 7-methylguanine residues, releasing 2,6-diamino-4-hydroxy-5-(N-methyl)formamidopyrimidine.. The catalysed reaction is 2'-deoxyribonucleotide-(2'-deoxyribose 5'-phosphate)-2'-deoxyribonucleotide-DNA = a 3'-end 2'-deoxyribonucleotide-(2,3-dehydro-2,3-deoxyribose 5'-phosphate)-DNA + a 5'-end 5'-phospho-2'-deoxyribonucleoside-DNA + H(+). Its function is as follows. Involved in base excision repair of DNA damaged by oxidation or by mutagenic agents. Acts as a DNA glycosylase that recognizes and removes damaged bases. Has a preference for oxidized purines, such as 7,8-dihydro-8-oxoguanine (8-oxoG). Has AP (apurinic/apyrimidinic) lyase activity and introduces nicks in the DNA strand. Cleaves the DNA backbone by beta-delta elimination to generate a single-strand break at the site of the removed base with both 3'- and 5'-phosphates. This Dechloromonas aromatica (strain RCB) protein is Formamidopyrimidine-DNA glycosylase.